Reading from the N-terminus, the 175-residue chain is ATP synthase subunit b (175 aa).

A helical transmembrane segment spans residues 22–44 (MLVQLFFFLILLALLKKFAWGPL).

Belongs to the ATPase B chain family. As to quaternary structure, F-type ATPases have 2 components, F(1) - the catalytic core - and F(0) - the membrane proton channel. F(1) has five subunits: alpha(3), beta(3), gamma(1), delta(1), epsilon(1). F(0) has three main subunits: a(1), b(2) and c(10-14). The alpha and beta chains form an alternating ring which encloses part of the gamma chain. F(1) is attached to F(0) by a central stalk formed by the gamma and epsilon chains, while a peripheral stalk is formed by the delta and b chains.

The protein resides in the cell membrane. F(1)F(0) ATP synthase produces ATP from ADP in the presence of a proton or sodium gradient. F-type ATPases consist of two structural domains, F(1) containing the extramembraneous catalytic core and F(0) containing the membrane proton channel, linked together by a central stalk and a peripheral stalk. During catalysis, ATP synthesis in the catalytic domain of F(1) is coupled via a rotary mechanism of the central stalk subunits to proton translocation. Functionally, component of the F(0) channel, it forms part of the peripheral stalk, linking F(1) to F(0). The protein is ATP synthase subunit b of Oceanobacillus iheyensis (strain DSM 14371 / CIP 107618 / JCM 11309 / KCTC 3954 / HTE831).